We begin with the raw amino-acid sequence, 216 residues long: Large ribosomal subunit protein uL3 (216 aa).

Glutamine 157 bears the N5-methylglutamine mark.

The protein belongs to the universal ribosomal protein uL3 family. Part of the 50S ribosomal subunit. Forms a cluster with proteins L14 and L19. In terms of processing, methylated by PrmB.

In terms of biological role, one of the primary rRNA binding proteins, it binds directly near the 3'-end of the 23S rRNA, where it nucleates assembly of the 50S subunit. This chain is Large ribosomal subunit protein uL3, found in Xanthomonas axonopodis pv. citri (strain 306).